We begin with the raw amino-acid sequence, 327 residues long: Glycerol-3-phosphate dehydrogenase [NAD(P)+] (327 aa).

NADPH is bound by residues phenylalanine 13, arginine 34, and lysine 107. 2 residues coordinate sn-glycerol 3-phosphate: lysine 107 and glycine 135. Residue alanine 139 coordinates NADPH. Lysine 190, aspartate 243, serine 253, arginine 254, and asparagine 255 together coordinate sn-glycerol 3-phosphate. Catalysis depends on lysine 190, which acts as the Proton acceptor. NADPH is bound at residue arginine 254. Residues valine 276 and glutamate 277 each contribute to the NADPH site.

It belongs to the NAD-dependent glycerol-3-phosphate dehydrogenase family.

It is found in the cytoplasm. The catalysed reaction is sn-glycerol 3-phosphate + NAD(+) = dihydroxyacetone phosphate + NADH + H(+). It catalyses the reaction sn-glycerol 3-phosphate + NADP(+) = dihydroxyacetone phosphate + NADPH + H(+). It participates in membrane lipid metabolism; glycerophospholipid metabolism. In terms of biological role, catalyzes the reduction of the glycolytic intermediate dihydroxyacetone phosphate (DHAP) to sn-glycerol 3-phosphate (G3P), the key precursor for phospholipid synthesis. The polypeptide is Glycerol-3-phosphate dehydrogenase [NAD(P)+] (Rhizobium johnstonii (strain DSM 114642 / LMG 32736 / 3841) (Rhizobium leguminosarum bv. viciae)).